Consider the following 97-residue polypeptide: Small cell adhesion glycoprotein (97 aa).

Residues 1-36 (MTSFPTTPPPAEELMATTILQATEALSPEAEASTAL) are Extracellular-facing. A glycan (O-linked (GalNAc...) threonine) is linked at Thr2. An O-linked (GalNAc...) serine glycan is attached at Ser3. O-linked (GalNAc...) threonine glycosylation is found at Thr6, Thr7, Thr17, Thr18, and Thr23. Residues 37-57 (IAVVITVVFLTLLSVVILIFF) form a helical; Signal-anchor for type III membrane protein membrane-spanning segment. The Cytoplasmic portion of the chain corresponds to 58-97 (YLYKNKGSYVTYEPADGEPGAVVLMENDSAKGREKEEYFI).

Belongs to the SMAGP family. Post-translationally, O-glycosylated. The O-glycan is modified with sialic acid residues.

The protein resides in the cell membrane. It is found in the cytoplasmic vesicle membrane. Functionally, may play a role in epithelial cell-cell contacts. May play a role in tumor invasiveness and metastasis formation. The polypeptide is Small cell adhesion glycoprotein (SMAGP) (Bos taurus (Bovine)).